The chain runs to 465 residues: Iron-sulfur cluster assembly SufBD family protein SH2035 (465 aa).

This sequence belongs to the iron-sulfur cluster assembly SufBD family.

The protein is Iron-sulfur cluster assembly SufBD family protein SH2035 of Staphylococcus haemolyticus (strain JCSC1435).